The sequence spans 469 residues: Serine carboxypeptidase-like 41 (469 aa).

A signal peptide spans 1 to 20 (MAIVSLRDVAMVMVTVQVFA). 3 disulfides stabilise this stretch: Cys83–Cys342, Cys243–Cys260, and Cys285–Cys310. Asn134 carries an N-linked (GlcNAc...) asparagine glycan. The active site involves Ser175. Asn255 carries N-linked (GlcNAc...) asparagine glycosylation. Residues Asn331 and Asn347 are each glycosylated (N-linked (GlcNAc...) asparagine). Residues Asp379 and His436 contribute to the active site. A glycan (N-linked (GlcNAc...) asparagine) is linked at Asn461.

It belongs to the peptidase S10 family. In terms of tissue distribution, expressed in flowers.

It is found in the secreted. Probable carboxypeptidase. This chain is Serine carboxypeptidase-like 41 (SCPL41), found in Arabidopsis thaliana (Mouse-ear cress).